Consider the following 101-residue polypeptide: Small ribosomal subunit protein uS14 (101 aa).

Belongs to the universal ribosomal protein uS14 family. Part of the 30S ribosomal subunit. Contacts proteins S3 and S10.

In terms of biological role, binds 16S rRNA, required for the assembly of 30S particles and may also be responsible for determining the conformation of the 16S rRNA at the A site. The chain is Small ribosomal subunit protein uS14 from Pseudomonas putida (strain GB-1).